The following is a 434-amino-acid chain: Phosphomethylpyrimidine synthase (434 aa).

Substrate contacts are provided by residues N74, M103, Y132, H171, S193–G195, D234–R237, and E273. Position 277 (H277) interacts with Zn(2+). Y300 lines the substrate pocket. Residue H341 participates in Zn(2+) binding. [4Fe-4S] cluster is bound by residues C417, C420, and C424.

The protein belongs to the ThiC family. In terms of assembly, homodimer. [4Fe-4S] cluster serves as cofactor.

It catalyses the reaction 5-amino-1-(5-phospho-beta-D-ribosyl)imidazole + S-adenosyl-L-methionine = 4-amino-2-methyl-5-(phosphooxymethyl)pyrimidine + CO + 5'-deoxyadenosine + formate + L-methionine + 3 H(+). It participates in cofactor biosynthesis; thiamine diphosphate biosynthesis. Catalyzes the synthesis of the hydroxymethylpyrimidine phosphate (HMP-P) moiety of thiamine from aminoimidazole ribotide (AIR) in a radical S-adenosyl-L-methionine (SAM)-dependent reaction. The protein is Phosphomethylpyrimidine synthase of Desulfotalea psychrophila (strain LSv54 / DSM 12343).